The primary structure comprises 260 residues: Proteasome subunit alpha (260 aa).

Residues 241 to 260 (VEAEEVPEKEEDYSELDSNY) are disordered. Positions 242 to 260 (EAEEVPEKEEDYSELDSNY) are enriched in acidic residues.

It belongs to the peptidase T1A family. As to quaternary structure, the 20S proteasome core is composed of 14 alpha and 14 beta subunits that assemble into four stacked heptameric rings, resulting in a barrel-shaped structure. The two inner rings, each composed of seven catalytic beta subunits, are sandwiched by two outer rings, each composed of seven alpha subunits. The catalytic chamber with the active sites is on the inside of the barrel. Has a gated structure, the ends of the cylinder being occluded by the N-termini of the alpha-subunits. Is capped at one or both ends by the proteasome regulatory ATPase, PAN.

Its subcellular location is the cytoplasm. The formation of the proteasomal ATPase PAN-20S proteasome complex, via the docking of the C-termini of PAN into the intersubunit pockets in the alpha-rings, triggers opening of the gate for substrate entry. Interconversion between the open-gate and close-gate conformations leads to a dynamic regulation of the 20S proteasome proteolysis activity. Component of the proteasome core, a large protease complex with broad specificity involved in protein degradation. In Thermococcus sibiricus (strain DSM 12597 / MM 739), this protein is Proteasome subunit alpha.